We begin with the raw amino-acid sequence, 166 residues long: Lipoprotein signal peptidase (166 aa).

4 helical membrane-spanning segments follow: residues 9–29 (ASGALAPWLGISLIVILFDQL), 45–65 (ALTSFFSLVLVYNRGAAFGFL), 71–91 (WQRWAFTALGIGATLVICFLL), and 100–120 (FSLSLALILGGALGNVIDRLV). Residues Asp126 and Asp144 contribute to the active site. A helical membrane pass occupies residues 135–155 (WHFPAFNLADSAITIGAVLLV).

This sequence belongs to the peptidase A8 family.

The protein resides in the cell inner membrane. The enzyme catalyses Release of signal peptides from bacterial membrane prolipoproteins. Hydrolyzes -Xaa-Yaa-Zaa-|-(S,diacylglyceryl)Cys-, in which Xaa is hydrophobic (preferably Leu), and Yaa (Ala or Ser) and Zaa (Gly or Ala) have small, neutral side chains.. It functions in the pathway protein modification; lipoprotein biosynthesis (signal peptide cleavage). This protein specifically catalyzes the removal of signal peptides from prolipoproteins. In Burkholderia ambifaria (strain ATCC BAA-244 / DSM 16087 / CCUG 44356 / LMG 19182 / AMMD) (Burkholderia cepacia (strain AMMD)), this protein is Lipoprotein signal peptidase.